A 527-amino-acid polypeptide reads, in one-letter code: Peptide chain release factor 3 (527 aa).

Residues 9-278 (NKRRTFAIIS…GLTQWAPKPQ (270 aa)) enclose the tr-type G domain. Residues 18–25 (SHPDAGKT), 86–90 (DTPGH), and 140–143 (NKLD) contribute to the GTP site.

The protein belongs to the TRAFAC class translation factor GTPase superfamily. Classic translation factor GTPase family. PrfC subfamily.

Its subcellular location is the cytoplasm. Increases the formation of ribosomal termination complexes and stimulates activities of RF-1 and RF-2. It binds guanine nucleotides and has strong preference for UGA stop codons. It may interact directly with the ribosome. The stimulation of RF-1 and RF-2 is significantly reduced by GTP and GDP, but not by GMP. In Haemophilus influenzae (strain PittGG), this protein is Peptide chain release factor 3.